A 213-amino-acid chain; its full sequence is Glutathione S-transferase (213 aa).

Residues 4–81 (AKPILYGAWI…YLEDKYPQHP (78 aa)) enclose the GST N-terminal domain. The 126-residue stretch at 86-211 (DIKTKGLDLQ…LPQNQPDAPS (126 aa)) folds into the GST C-terminal domain.

It belongs to the GST superfamily. Zeta family.

It localises to the cytoplasm. It catalyses the reaction RX + glutathione = an S-substituted glutathione + a halide anion + H(+). Its function is as follows. Has a glutathione transferase activity with ethacrynic acid and nitrophenyl acetate. Has low glutathione peroxidase activity with cumene hydroperoxide. The polypeptide is Glutathione S-transferase (GSTZ1) (Triticum aestivum (Wheat)).